A 269-amino-acid polypeptide reads, in one-letter code: 4-hydroxy-tetrahydrodipicolinate reductase (269 aa).

NAD(+) is bound by residues 11–16 (GASGRM) and Glu-37. Arg-38 is an NADP(+) binding site. Residues 101 to 103 (GTT) and 125 to 128 (AGNM) each bind NAD(+). His-158 serves as the catalytic Proton donor/acceptor. His-159 contributes to the (S)-2,3,4,5-tetrahydrodipicolinate binding site. Lys-162 functions as the Proton donor in the catalytic mechanism. Residue 168 to 169 (GT) participates in (S)-2,3,4,5-tetrahydrodipicolinate binding.

The protein belongs to the DapB family.

Its subcellular location is the cytoplasm. The enzyme catalyses (S)-2,3,4,5-tetrahydrodipicolinate + NAD(+) + H2O = (2S,4S)-4-hydroxy-2,3,4,5-tetrahydrodipicolinate + NADH + H(+). It carries out the reaction (S)-2,3,4,5-tetrahydrodipicolinate + NADP(+) + H2O = (2S,4S)-4-hydroxy-2,3,4,5-tetrahydrodipicolinate + NADPH + H(+). It participates in amino-acid biosynthesis; L-lysine biosynthesis via DAP pathway; (S)-tetrahydrodipicolinate from L-aspartate: step 4/4. Its function is as follows. Catalyzes the conversion of 4-hydroxy-tetrahydrodipicolinate (HTPA) to tetrahydrodipicolinate. This Ruegeria sp. (strain TM1040) (Silicibacter sp.) protein is 4-hydroxy-tetrahydrodipicolinate reductase.